Reading from the N-terminus, the 275-residue chain is Bis(5'-nucleosyl)-tetraphosphatase, symmetrical (275 aa).

It belongs to the Ap4A hydrolase family.

The enzyme catalyses P(1),P(4)-bis(5'-adenosyl) tetraphosphate + H2O = 2 ADP + 2 H(+). Functionally, hydrolyzes diadenosine 5',5'''-P1,P4-tetraphosphate to yield ADP. The protein is Bis(5'-nucleosyl)-tetraphosphatase, symmetrical of Hamiltonella defensa subsp. Acyrthosiphon pisum (strain 5AT).